Consider the following 179-residue polypeptide: Ubiquitin-conjugating enzyme E2 C (179 aa).

A disordered region spans residues 1-31 (MASQNVDPAAASSVASRKGQESGTSAARGSV). Residues 30 to 179 (SVGKRLQQEL…YQKQVREKEI (150 aa)) form the UBC core domain. Residue Cys-114 is the Glycyl thioester intermediate of the active site.

This sequence belongs to the ubiquitin-conjugating enzyme family. As to quaternary structure, component of the APC/C complex. Post-translationally, autoubiquitinated by the APC/C complex, leading to its degradation by the proteasome.

It carries out the reaction S-ubiquitinyl-[E1 ubiquitin-activating enzyme]-L-cysteine + [E2 ubiquitin-conjugating enzyme]-L-cysteine = [E1 ubiquitin-activating enzyme]-L-cysteine + S-ubiquitinyl-[E2 ubiquitin-conjugating enzyme]-L-cysteine.. The catalysed reaction is S-ubiquitinyl-[E1 ubiquitin-activating enzyme]-L-cysteine + [acceptor protein]-L-lysine = [E1 ubiquitin-activating enzyme]-L-cysteine + N(6)-monoubiquitinyl-[acceptor protein]-L-lysine.. It participates in protein modification; protein ubiquitination. Its function is as follows. Catalyzes the covalent attachment of ubiquitin to other proteins. Acts as an essential factor of the anaphase promoting complex/cyclosome (APC/C), a cell cycle-regulated ubiquitin ligase that controls progression through mitosis. Acts by initiating 'Lys-11'-linked polyubiquitin chains on APC/C substrates, leading to the degradation of APC/C substrates by the proteasome and promoting mitotic exit. This chain is Ubiquitin-conjugating enzyme E2 C (ube2c), found in Xenopus laevis (African clawed frog).